Consider the following 136-residue polypeptide: ATP synthase epsilon chain (136 aa).

The interval 95 to 115 (DFSEAQSRLEEANKGSDRREQ) is disordered. The span at 101 to 115 (SRLEEANKGSDRREQ) shows a compositional bias: basic and acidic residues.

It belongs to the ATPase epsilon chain family. F-type ATPases have 2 components, CF(1) - the catalytic core - and CF(0) - the membrane proton channel. CF(1) has five subunits: alpha(3), beta(3), gamma(1), delta(1), epsilon(1). CF(0) has three main subunits: a, b and c.

The protein resides in the cellular thylakoid membrane. Its function is as follows. Produces ATP from ADP in the presence of a proton gradient across the membrane. The protein is ATP synthase epsilon chain of Rippkaea orientalis (strain PCC 8801 / RF-1) (Cyanothece sp. (strain PCC 8801)).